We begin with the raw amino-acid sequence, 311 residues long: HPr kinase/phosphorylase (311 aa).

Residues H139 and K160 contribute to the active site. 154–161 (GDSGVGKS) serves as a coordination point for ATP. S161 lines the Mg(2+) pocket. Residue D178 is the Proton acceptor; for phosphorylation activity. Proton donor; for dephosphorylation activity of the active site. The important for the catalytic mechanism of both phosphorylation and dephosphorylation stretch occupies residues 202–211 (LEIRGIGIID). E203 is a binding site for Mg(2+). R244 is a catalytic residue. Residues 265–270 (PVKTGR) form an important for the catalytic mechanism of dephosphorylation region.

Belongs to the HPrK/P family. As to quaternary structure, homohexamer. Mg(2+) is required as a cofactor.

It catalyses the reaction [HPr protein]-L-serine + ATP = [HPr protein]-O-phospho-L-serine + ADP + H(+). The enzyme catalyses [HPr protein]-O-phospho-L-serine + phosphate + H(+) = [HPr protein]-L-serine + diphosphate. Functionally, catalyzes the ATP- as well as the pyrophosphate-dependent phosphorylation of a specific serine residue in HPr, a phosphocarrier protein of the phosphoenolpyruvate-dependent sugar phosphotransferase system (PTS). HprK/P also catalyzes the pyrophosphate-producing, inorganic phosphate-dependent dephosphorylation (phosphorolysis) of seryl-phosphorylated HPr (P-Ser-HPr). The two antagonistic activities of HprK/P are regulated by several intracellular metabolites, which change their concentration in response to the absence or presence of rapidly metabolisable carbon sources (glucose, fructose, etc.) in the growth medium. Therefore, by controlling the phosphorylation state of HPr, HPrK/P is a sensor enzyme that plays a major role in the regulation of carbon metabolism and sugar transport: it mediates carbon catabolite repression (CCR), and regulates PTS-catalyzed carbohydrate uptake and inducer exclusion. The polypeptide is HPr kinase/phosphorylase (Levilactobacillus brevis (strain ATCC 367 / BCRC 12310 / CIP 105137 / JCM 1170 / LMG 11437 / NCIMB 947 / NCTC 947) (Lactobacillus brevis)).